A 572-amino-acid chain; its full sequence is Sulfite reductase [NADPH] hemoprotein beta-component (572 aa).

Residues Cys-437, Cys-443, Cys-482, and Cys-486 each coordinate [4Fe-4S] cluster. Cys-486 lines the siroheme pocket.

Belongs to the nitrite and sulfite reductase 4Fe-4S domain family. Alpha(8)-beta(8). The alpha component is a flavoprotein, the beta component is a hemoprotein. The cofactor is siroheme. It depends on [4Fe-4S] cluster as a cofactor.

The catalysed reaction is hydrogen sulfide + 3 NADP(+) + 3 H2O = sulfite + 3 NADPH + 4 H(+). It participates in sulfur metabolism; hydrogen sulfide biosynthesis; hydrogen sulfide from sulfite (NADPH route): step 1/1. Its function is as follows. Component of the sulfite reductase complex that catalyzes the 6-electron reduction of sulfite to sulfide. This is one of several activities required for the biosynthesis of L-cysteine from sulfate. The protein is Sulfite reductase [NADPH] hemoprotein beta-component of Lysinibacillus sphaericus (strain C3-41).